Reading from the N-terminus, the 202-residue chain is Small ribosomal subunit protein uS4c (202 aa).

The region spanning 90 to 158 (MRSDNVIFRL…ISKNIELYQK (69 aa)) is the S4 RNA-binding domain.

The protein belongs to the universal ribosomal protein uS4 family. As to quaternary structure, part of the 30S ribosomal subunit. Contacts protein S5. The interaction surface between S4 and S5 is involved in control of translational fidelity.

It is found in the plastid. It localises to the chloroplast. Functionally, one of the primary rRNA binding proteins, it binds directly to 16S rRNA where it nucleates assembly of the body of the 30S subunit. Its function is as follows. With S5 and S12 plays an important role in translational accuracy. The chain is Small ribosomal subunit protein uS4c (rps4) from Anthoceros punctatus (Hornwort).